The sequence spans 796 residues: Lon protease 2 (796 aa).

One can recognise a Lon N-terminal domain in the interval 9-206 (LPIVILKENV…KLIVNLSIEI (198 aa)). Residue 352 to 359 (GPPGIGKT) coordinates ATP. The Lon proteolytic domain maps to 617–796 (IDSSGFVYGL…EEVFDYLNII (180 aa)). Residues Ser-702 and Lys-745 contribute to the active site.

This sequence belongs to the peptidase S16 family. As to quaternary structure, homohexamer. Organized in a ring with a central cavity.

It localises to the cytoplasm. It carries out the reaction Hydrolysis of proteins in presence of ATP.. In terms of biological role, ATP-dependent serine protease that mediates the selective degradation of mutant and abnormal proteins as well as certain short-lived regulatory proteins. Required for cellular homeostasis and for survival from DNA damage and developmental changes induced by stress. Degrades polypeptides processively to yield small peptide fragments that are 5 to 10 amino acids long. Binds to DNA in a double-stranded, site-specific manner. In Borreliella burgdorferi (strain ATCC 35210 / DSM 4680 / CIP 102532 / B31) (Borrelia burgdorferi), this protein is Lon protease 2 (lon2).